The primary structure comprises 93 residues: Co-chaperonin GroES (93 aa).

It belongs to the GroES chaperonin family. Heptamer of 7 subunits arranged in a ring. Interacts with the chaperonin GroEL.

It is found in the cytoplasm. Together with the chaperonin GroEL, plays an essential role in assisting protein folding. The GroEL-GroES system forms a nano-cage that allows encapsulation of the non-native substrate proteins and provides a physical environment optimized to promote and accelerate protein folding. GroES binds to the apical surface of the GroEL ring, thereby capping the opening of the GroEL channel. The chain is Co-chaperonin GroES from Streptococcus sanguinis.